Consider the following 154-residue polypeptide: SsrA-binding protein (154 aa).

A disordered region spans residues D131–Q154. Residues K132–Q154 are compositionally biased toward basic and acidic residues.

It belongs to the SmpB family.

It localises to the cytoplasm. Its function is as follows. Required for rescue of stalled ribosomes mediated by trans-translation. Binds to transfer-messenger RNA (tmRNA), required for stable association of tmRNA with ribosomes. tmRNA and SmpB together mimic tRNA shape, replacing the anticodon stem-loop with SmpB. tmRNA is encoded by the ssrA gene; the 2 termini fold to resemble tRNA(Ala) and it encodes a 'tag peptide', a short internal open reading frame. During trans-translation Ala-aminoacylated tmRNA acts like a tRNA, entering the A-site of stalled ribosomes, displacing the stalled mRNA. The ribosome then switches to translate the ORF on the tmRNA; the nascent peptide is terminated with the 'tag peptide' encoded by the tmRNA and targeted for degradation. The ribosome is freed to recommence translation, which seems to be the essential function of trans-translation. This is SsrA-binding protein from Listeria innocua serovar 6a (strain ATCC BAA-680 / CLIP 11262).